Consider the following 165-residue polypeptide: Phosphopantetheine adenylyltransferase (165 aa).

A substrate-binding site is contributed by Thr11. ATP contacts are provided by residues 11-12 (TF) and His19. Substrate-binding residues include Lys43, Val75, and Arg89. Residues 90–92 (GLR), Glu100, and 125–131 (YQFISST) contribute to the ATP site.

Belongs to the bacterial CoaD family. In terms of assembly, homohexamer. Mg(2+) is required as a cofactor.

The protein resides in the cytoplasm. It catalyses the reaction (R)-4'-phosphopantetheine + ATP + H(+) = 3'-dephospho-CoA + diphosphate. The protein operates within cofactor biosynthesis; coenzyme A biosynthesis; CoA from (R)-pantothenate: step 4/5. Its function is as follows. Reversibly transfers an adenylyl group from ATP to 4'-phosphopantetheine, yielding dephospho-CoA (dPCoA) and pyrophosphate. This chain is Phosphopantetheine adenylyltransferase, found in Acidovorax ebreus (strain TPSY) (Diaphorobacter sp. (strain TPSY)).